A 124-amino-acid polypeptide reads, in one-letter code: Small ribosomal subunit protein bS6 (124 aa).

Positions 99-124 are disordered; it reads PLPAPRVMPGSEAAQQQQAEAAASAD. A compositionally biased stretch (low complexity) spans 109 to 124; the sequence is SEAAQQQQAEAAASAD.

Belongs to the bacterial ribosomal protein bS6 family.

Functionally, binds together with bS18 to 16S ribosomal RNA. The sequence is that of Small ribosomal subunit protein bS6 from Synechococcus sp. (strain CC9605).